A 126-amino-acid polypeptide reads, in one-letter code: Small ribosomal subunit protein uS12 (126 aa).

Residues methionine 1–aspartate 26 form a disordered region. Aspartate 89 bears the 3-methylthioaspartic acid mark. The disordered stretch occupies residues leucine 102–lysine 126. Over residues alanine 113–lysine 126 the composition is skewed to basic residues.

Belongs to the universal ribosomal protein uS12 family. As to quaternary structure, part of the 30S ribosomal subunit. Contacts proteins S8 and S17. May interact with IF1 in the 30S initiation complex.

Its function is as follows. With S4 and S5 plays an important role in translational accuracy. In terms of biological role, interacts with and stabilizes bases of the 16S rRNA that are involved in tRNA selection in the A site and with the mRNA backbone. Located at the interface of the 30S and 50S subunits, it traverses the body of the 30S subunit contacting proteins on the other side and probably holding the rRNA structure together. The combined cluster of proteins S8, S12 and S17 appears to hold together the shoulder and platform of the 30S subunit. The polypeptide is Small ribosomal subunit protein uS12 (Burkholderia mallei (strain ATCC 23344)).